The primary structure comprises 437 residues: Phenylacetate-coenzyme A ligase (437 aa).

Belongs to the phenylacetyl-CoA ligase family. Monomer.

It carries out the reaction 2-phenylacetate + ATP + CoA = phenylacetyl-CoA + AMP + diphosphate. Its pathway is aromatic compound metabolism; phenylacetate degradation. Catalyzes the activation of phenylacetic acid (PA) to phenylacetyl-CoA (PA-CoA). This chain is Phenylacetate-coenzyme A ligase (paaK), found in Escherichia coli (strain K12).